Here is a 471-residue protein sequence, read N- to C-terminus: Glutamate--tRNA ligase (471 aa).

A 'HIGH' region motif is present at residues 10–20 (PSPTGFLHIGG). The disordered stretch occupies residues 117–137 (GRPPRYDGRWRDRPASERPTD). Positions 239–243 (KLSKR) match the 'KMSKS' region motif. Residue K242 participates in ATP binding.

It belongs to the class-I aminoacyl-tRNA synthetase family. Glutamate--tRNA ligase type 1 subfamily. Monomer.

The protein localises to the cytoplasm. It carries out the reaction tRNA(Glu) + L-glutamate + ATP = L-glutamyl-tRNA(Glu) + AMP + diphosphate. Catalyzes the attachment of glutamate to tRNA(Glu) in a two-step reaction: glutamate is first activated by ATP to form Glu-AMP and then transferred to the acceptor end of tRNA(Glu). The protein is Glutamate--tRNA ligase of Azorhizobium caulinodans (strain ATCC 43989 / DSM 5975 / JCM 20966 / LMG 6465 / NBRC 14845 / NCIMB 13405 / ORS 571).